A 101-amino-acid chain; its full sequence is Putative pterin-4-alpha-carbinolamine dehydratase (101 aa).

It belongs to the pterin-4-alpha-carbinolamine dehydratase family.

The catalysed reaction is (4aS,6R)-4a-hydroxy-L-erythro-5,6,7,8-tetrahydrobiopterin = (6R)-L-erythro-6,7-dihydrobiopterin + H2O. The sequence is that of Putative pterin-4-alpha-carbinolamine dehydratase from Rhodopseudomonas palustris (strain HaA2).